Consider the following 53-residue polypeptide: Metallocarboxypeptidase inhibitor b (53 aa).

3 disulfide bridges follow: cysteine 9–cysteine 23, cysteine 15–cysteine 51, and cysteine 27–cysteine 38. Position 53 (alanine 53) interacts with Zn(2+).

Functionally, metallocarboxypeptidase inhibitor. Has an inhibitory effect on bovine CPA1 and porcine CPB1. Does not inhibit D.melanogaster svr (carboxypeptidase D). Shows no activity against serine proteases subtilisin or bovine trypsin, cysteine protease papain, and aspartyl protease porcine pepsin. The polypeptide is Metallocarboxypeptidase inhibitor b (Nerita versicolor (Four-tooth nerite)).